Consider the following 629-residue polypeptide: Serine/threonine-protein kinase ICK (629 aa).

The 281-residue stretch at 4 to 284 folds into the Protein kinase domain; that stretch reads YTTIKQLGDG…ASQALRYPYF (281 aa). Residues 10 to 18 and K33 contribute to the ATP site; that span reads LGDGTYGSV. The active-site Proton acceptor is the D125. At T157 the chain carries Phosphothreonine. Y159 carries the phosphotyrosine modification. Position 161 is a phosphoserine (S161). Disordered stretches follow at residues 292-322, 454-482, and 579-629; these read ISTQ…PAQA, PSEP…QSTA, and GYSS…PSRR. Positions 309–321 are enriched in pro residues; sequence GPPPYVKPAPPAQ. Positions 460–482 are enriched in polar residues; that stretch reads TGTSVSTQASSQRRDTPTLQSTA.

This sequence belongs to the protein kinase superfamily. CMGC Ser/Thr protein kinase family. CDC2/CDKX subfamily. The cofactor is Mg(2+). Autophosphorylated on serine and threonine residues. Phosphorylation at Thr-157 increases kinase activity. Expressed in embryonic heart from day 11. Highly expressed in the uterus and at lower levels in brain, heart, lung, kidney, skeletal muscle, ovary and liver in adult tissues.

The protein resides in the cytoplasm. The protein localises to the cell projection. It localises to the cilium. It is found in the nucleus. Its subcellular location is the cytoskeleton. The protein resides in the cilium basal body. The catalysed reaction is L-seryl-[protein] + ATP = O-phospho-L-seryl-[protein] + ADP + H(+). It carries out the reaction L-threonyl-[protein] + ATP = O-phospho-L-threonyl-[protein] + ADP + H(+). Its function is as follows. Required for ciliogenesis, particularly in neuronal and retinal progenitor cells. Phosphorylates KIF3A. Involved in the control of ciliary length. Regulates the ciliary localization of SHH pathway components as well as the localization of IFT components at ciliary tips. May play a role in cardiac development. Regulates intraflagellar transport (IFT) speed and negatively regulates cilium length in a cAMP and mTORC1 signaling-dependent manner and this regulation requires its kinase activity. The chain is Serine/threonine-protein kinase ICK (Cilk1) from Rattus norvegicus (Rat).